Reading from the N-terminus, the 91-residue chain is Small ribosomal subunit protein uS15c (91 aa).

This sequence belongs to the universal ribosomal protein uS15 family. Part of the 30S ribosomal subunit.

The protein localises to the plastid. It localises to the chloroplast. The polypeptide is Small ribosomal subunit protein uS15c (rps15) (Cicer arietinum (Chickpea)).